Consider the following 196-residue polypeptide: Imidazole glycerol phosphate synthase subunit HisH (196 aa).

A Glutamine amidotransferase type-1 domain is found at 2–196 (NVVIVDTECA…LKRFLELTLC (195 aa)). The active-site Nucleophile is the cysteine 77. Residues histidine 175 and glutamate 177 contribute to the active site.

In terms of assembly, heterodimer of HisH and HisF.

It is found in the cytoplasm. It catalyses the reaction 5-[(5-phospho-1-deoxy-D-ribulos-1-ylimino)methylamino]-1-(5-phospho-beta-D-ribosyl)imidazole-4-carboxamide + L-glutamine = D-erythro-1-(imidazol-4-yl)glycerol 3-phosphate + 5-amino-1-(5-phospho-beta-D-ribosyl)imidazole-4-carboxamide + L-glutamate + H(+). The enzyme catalyses L-glutamine + H2O = L-glutamate + NH4(+). It functions in the pathway amino-acid biosynthesis; L-histidine biosynthesis; L-histidine from 5-phospho-alpha-D-ribose 1-diphosphate: step 5/9. IGPS catalyzes the conversion of PRFAR and glutamine to IGP, AICAR and glutamate. The HisH subunit catalyzes the hydrolysis of glutamine to glutamate and ammonia as part of the synthesis of IGP and AICAR. The resulting ammonia molecule is channeled to the active site of HisF. This is Imidazole glycerol phosphate synthase subunit HisH from Idiomarina loihiensis (strain ATCC BAA-735 / DSM 15497 / L2-TR).